The following is a 51-amino-acid chain: Ribosome biogenesis protein Nop10 (51 aa).

The protein belongs to the NOP10 family.

Involved in ribosome biogenesis; more specifically in 18S rRNA pseudouridylation and in cleavage of pre-rRNA. The polypeptide is Ribosome biogenesis protein Nop10 (Methanococcus maripaludis (strain C6 / ATCC BAA-1332)).